Consider the following 334-residue polypeptide: D-fructose 1,6-bisphosphatase class 2/sedoheptulose 1,7-bisphosphatase (334 aa).

Residues Asp-33, Glu-57, Asp-85, and Glu-88 each coordinate Mn(2+). Substrate-binding positions include 88-90 (EGT), Tyr-119, 164-166 (RAR), and 186-188 (DGD). Residue Glu-213 participates in Mn(2+) binding.

This sequence belongs to the FBPase class 2 family. In terms of assembly, homotetramer. It depends on Mn(2+) as a cofactor.

It catalyses the reaction beta-D-fructose 1,6-bisphosphate + H2O = beta-D-fructose 6-phosphate + phosphate. It carries out the reaction D-sedoheptulose 1,7-bisphosphate + H2O = D-sedoheptulose 7-phosphate + phosphate. It functions in the pathway carbohydrate biosynthesis; Calvin cycle. Its function is as follows. Catalyzes the hydrolysis of fructose 1,6-bisphosphate (Fru 1,6-P2) and sedoheptulose 1,7-bisphosphate (Sed 1,7-P2) to fructose 6-phosphate and sedoheptulose 7-phosphate, respectively. This Prochlorococcus marinus (strain MIT 9313) protein is D-fructose 1,6-bisphosphatase class 2/sedoheptulose 1,7-bisphosphatase.